A 157-amino-acid polypeptide reads, in one-letter code: UPF0225 protein PSPTO_4127 (157 aa).

This sequence belongs to the UPF0225 family.

The sequence is that of UPF0225 protein PSPTO_4127 from Pseudomonas syringae pv. tomato (strain ATCC BAA-871 / DC3000).